A 245-amino-acid polypeptide reads, in one-letter code: tRNA pseudouridine synthase A (245 aa).

Residue aspartate 52 is the Nucleophile of the active site. Tyrosine 111 is a substrate binding site.

The protein belongs to the tRNA pseudouridine synthase TruA family. Homodimer.

The enzyme catalyses uridine(38/39/40) in tRNA = pseudouridine(38/39/40) in tRNA. Its function is as follows. Formation of pseudouridine at positions 38, 39 and 40 in the anticodon stem and loop of transfer RNAs. The protein is tRNA pseudouridine synthase A of Thermotoga sp. (strain RQ2).